We begin with the raw amino-acid sequence, 203 residues long: Ras-related protein Rab-7L1 (203 aa).

The GTP site is built by serine 33, lysine 34, histidine 35, tyrosine 36, lysine 37, and threonine 39. The Effector region motif lies at 36–44; that stretch reads YKSTVGVDF. At threonine 71 the chain carries Phosphothreonine; by LRRK2. At serine 72 the chain carries Phosphoserine; by LRRK2. 3 residues coordinate GTP: lysine 126, valine 156, and lysine 157. Residues cysteine 202 and cysteine 203 are each lipidated (S-geranylgeranyl cysteine).

The protein belongs to the small GTPase superfamily. Rab family. As to quaternary structure, interacts with LRRK2 (via the N-terminus); this interaction is direct and stimulates kinase activity. Post-translationally, in case of Salmonella enterica serovar Typhimurium (S.typhimurium) infection, is proteolytically cleaved between Gly-41 and Val-42 by the GtgE viral protease encoded on the Gifsy-2 lysogen bacteriophage, which therefore prevents the recruitment of RAB29 to S.typhimurium-containing vacuoles. In contrast, no proteolytically cleavage is detected in S.typhi-infected cells. As to expression, ubiquitous.

Its subcellular location is the cell membrane. It localises to the cytoplasm. It is found in the perinuclear region. The protein localises to the golgi apparatus. The protein resides in the golgi apparatus membrane. Its subcellular location is the trans-Golgi network. It localises to the vacuole. It is found in the cytoskeleton. Functionally, the small GTPases Rab are key regulators in vesicle trafficking. Essential for maintaining the integrity of the endosome-trans-Golgi network structure. Together with LRRK2, plays a role in the retrograde trafficking pathway for recycling proteins, such as mannose 6 phosphate receptor (M6PR), between lysosomes and the Golgi apparatus in a retromer-dependent manner. Recruits LRRK2 to the Golgi complex and stimulates LRRK2 kinase activity. Stimulates phosphorylation of RAB10 'Thr-73' by LRRK2. Regulates neuronal process morphology in the intact central nervous system (CNS). May play a role in the formation of typhoid toxin transport intermediates during Salmonella enterica serovar Typhi (S.typhi) epithelial cell infection. This Homo sapiens (Human) protein is Ras-related protein Rab-7L1 (RAB29).